The chain runs to 201 residues: MSKRIAGPEIERLIQLLAKVPGLGPRSARRAALHLIKKKEQLFSPLTTAMAEALAKVRVCSVCGNVDTSDPCTICTDPRRESATLIVVEDVSDLWALERAAALNARYHVLGGTLSPLDGVGPDDLNIKGLVSRIAEGGVSEVILAVNATVEGQATAHYITDQLVGLEVRVTKLAHGVPVGGELDYLDEGTLAAALKSRTAF.

Residues 60–75 form a C4-type zinc finger; sequence CSVCGNVDTSDPCTIC. Residues 83–178 form the Toprim domain; the sequence is ATLIVVEDVS…RVTKLAHGVP (96 aa).

The protein belongs to the RecR family.

May play a role in DNA repair. It seems to be involved in an RecBC-independent recombinational process of DNA repair. It may act with RecF and RecO. The polypeptide is Recombination protein RecR (Chelativorans sp. (strain BNC1)).